Here is a 647-residue protein sequence, read N- to C-terminus: Phosphomethylpyrimidine synthase (647 aa).

Substrate is bound by residues Asn-235, Met-264, Tyr-293, His-329, 349–351 (SRG), 390–393 (DGLR), and Glu-429. His-433 contributes to the Zn(2+) binding site. Tyr-456 contributes to the substrate binding site. Residue His-497 coordinates Zn(2+). [4Fe-4S] cluster contacts are provided by Cys-577, Cys-580, and Cys-585. The tract at residues 623 to 647 (KSAEFKASGSELYHPAVSHEEVAEG) is disordered.

Belongs to the ThiC family. Homodimer. It depends on [4Fe-4S] cluster as a cofactor.

It catalyses the reaction 5-amino-1-(5-phospho-beta-D-ribosyl)imidazole + S-adenosyl-L-methionine = 4-amino-2-methyl-5-(phosphooxymethyl)pyrimidine + CO + 5'-deoxyadenosine + formate + L-methionine + 3 H(+). The protein operates within cofactor biosynthesis; thiamine diphosphate biosynthesis. Catalyzes the synthesis of the hydroxymethylpyrimidine phosphate (HMP-P) moiety of thiamine from aminoimidazole ribotide (AIR) in a radical S-adenosyl-L-methionine (SAM)-dependent reaction. The sequence is that of Phosphomethylpyrimidine synthase from Vibrio vulnificus (strain CMCP6).